Reading from the N-terminus, the 426-residue chain is Methionine aminopeptidase 2 (426 aa).

The disordered stretch occupies residues Met-1–Gly-72. Residues Thr-10–Glu-34 show a composition bias toward basic and acidic residues. Basic residues predominate over residues Lys-47 to Lys-60. His-179 serves as a coordination point for substrate. A divalent metal cation-binding residues include Asp-199, Asp-210, and His-279. His-287 is a binding site for substrate. Residues Glu-312 and Glu-407 each coordinate a divalent metal cation.

It belongs to the peptidase M24A family. Methionine aminopeptidase eukaryotic type 2 subfamily. Co(2+) serves as cofactor. It depends on Zn(2+) as a cofactor. Mn(2+) is required as a cofactor. The cofactor is Fe(2+).

The protein resides in the cytoplasm. It catalyses the reaction Release of N-terminal amino acids, preferentially methionine, from peptides and arylamides.. In terms of biological role, cotranslationally removes the N-terminal methionine from nascent proteins. The N-terminal methionine is often cleaved when the second residue in the primary sequence is small and uncharged (Met-Ala-, Cys, Gly, Pro, Ser, Thr, or Val). In Schizosaccharomyces pombe (strain 972 / ATCC 24843) (Fission yeast), this protein is Methionine aminopeptidase 2 (fma2).